A 256-amino-acid polypeptide reads, in one-letter code: Glutamate racemase (256 aa).

Residues 11–12 (DS) and 43–44 (YG) each bind substrate. C74 serves as the catalytic Proton donor/acceptor. Residue 75–76 (NT) participates in substrate binding. C182 acts as the Proton donor/acceptor in catalysis. 183–184 (TH) serves as a coordination point for substrate.

It belongs to the aspartate/glutamate racemases family.

It catalyses the reaction L-glutamate = D-glutamate. Its pathway is cell wall biogenesis; peptidoglycan biosynthesis. In terms of biological role, provides the (R)-glutamate required for cell wall biosynthesis. The sequence is that of Glutamate racemase from Leptospira interrogans serogroup Icterohaemorrhagiae serovar copenhageni (strain Fiocruz L1-130).